The primary structure comprises 203 residues: Outer-membrane lipoprotein carrier protein (203 aa).

Residues 1 to 21 (MKKLLVACCLLSGFASTSVLA) form the signal peptide.

This sequence belongs to the LolA family. As to quaternary structure, monomer.

The protein localises to the periplasm. Functionally, participates in the translocation of lipoproteins from the inner membrane to the outer membrane. Only forms a complex with a lipoprotein if the residue after the N-terminal Cys is not an aspartate (The Asp acts as a targeting signal to indicate that the lipoprotein should stay in the inner membrane). The sequence is that of Outer-membrane lipoprotein carrier protein from Serratia proteamaculans (strain 568).